The primary structure comprises 601 residues: Multidrug and toxin extrusion protein 2 (601 aa).

The Cytoplasmic portion of the chain corresponds to 1 to 62 (MNTAFAGFDE…PRGFWDEARA (62 aa)). The helical transmembrane segment at 63-83 (LFVLSGPLFLFQVLNFLTYVV) threads the bilayer. Topologically, residues 84–95 (GTVFCGHLGKVE) are extracellular. The chain crosses the membrane as a helical span at residues 96–116 (LASVTLGVAFVNVCGVSVGAG). Over 117 to 145 (LSSACDTLMSQSFGSPNKKHVGVILQRGS) the chain is Cytoplasmic. A helical transmembrane segment spans residues 146–166 (LILLLCCLPCWALFLNTQHIL). The Extracellular portion of the chain corresponds to 167–182 (LLFRQDPAVSRLTQDY). Residues 183–203 (AMIFIPGLPAIFLYSLLAKYL) traverse the membrane as a helical segment. The Cytoplasmic segment spans residues 204–212 (QNQGIVWPQ). The helical transmembrane segment at 213–233 (VLSGVVGNCVNGVANYALVSV) threads the bilayer. Over 234–241 (LNLGVRGS) the chain is Extracellular. Residues 242–262 (AYANTISQFVQAAFLFLHIVL) form a helical membrane-spanning segment. Residues 263–281 (KKLHLETWEGWSSQCLRDW) lie on the Cytoplasmic side of the membrane. A helical membrane pass occupies residues 282 to 301 (GPFLSLAIPSMLMMCVEWWA). Residues 302–320 (YEIGSFLMGLLGVVDLSGQ) lie on the Extracellular side of the membrane. The chain crosses the membrane as a helical span at residues 321-341 (AIIYEVATVVYMIPMGLGMAV). Over 342–361 (CVRVGTALGAADTLQAKRSA) the chain is Cytoplasmic. A helical membrane pass occupies residues 362 to 382 (VSGLLCTAGTSLVVGTLLGLL). At 383-402 (NSQLGYIFTSDEEVIALVNQ) the chain is on the extracellular side. Residues 403–423 (VLPIYIVFQLVEAVCCVFGGV) form a helical membrane-spanning segment. Over 424–437 (LRGTGKQAFGAIVN) the chain is Cytoplasmic. The chain crosses the membrane as a helical span at residues 438 to 458 (AIMYYIVGLPLGIVLTFVVGM). A topological domain (extracellular) is located at residue Arg-459. The helical transmembrane segment at 460–480 (IMGLWLGMLTCIFLAAVTFVV) threads the bilayer. Residues 481-577 (YAVQLDWKLA…LSVRQLLFRR (97 aa)) are Cytoplasmic-facing. Residues 578–598 (GAALAASVAVLMAGLLVRVLT) traverse the membrane as a helical segment. Over 599–601 (TGY) the chain is Extracellular.

This sequence belongs to the multi antimicrobial extrusion (MATE) (TC 2.A.66.1) family. Expressed in renal cortical tissues.

The protein resides in the cell membrane. The protein localises to the apical cell membrane. It carries out the reaction thiamine(out) + H(+)(in) = thiamine(in) + H(+)(out). The catalysed reaction is estrone 3-sulfate(in) + H(+)(out) = estrone 3-sulfate(out) + H(+)(in). The enzyme catalyses creatinine(in) + H(+)(out) = creatinine(out) + H(+)(in). Its function is as follows. Multidrug efflux pump that functions as a H(+)/organic cation antiporter. Mediates the efflux of cationic compounds, such as the model cations, tetraethylammonium (TEA) and 1-methyl-4-phenylpyridinium (MPP+), the platinum-based drug oxaliplatin or weak bases that are positively charged at physiological pH, cimetidine or the antidiabetic drug metformin. Mediates the efflux of the endogenous compounds creatinine, thiamine and estrone-3-sulfate. Plays a physiological role in the excretion of drugs, toxins and endogenous metabolites through the kidney. In Oryctolagus cuniculus (Rabbit), this protein is Multidrug and toxin extrusion protein 2 (SLC47A2).